The chain runs to 464 residues: MNTLFDKIWDAHVVTTVEDGPTQLYIDRLYCHEVTSPQAFAGLRARGIKVFRPEKVYCMPDHNTPTHDQDKPIEDPVSKTQVDTLTKNAADFGLTHYGMMDKRNGIIHVVGPERGLTLPGMTIVCGDSHTSTHGAMGAVAFGIGTSEVEMVLASQCILQSRPKTMRITVDGKLGKGVTAKDIALYMMSKMTTSGATGYFVEYAGEAIRSLTMEGRLTLCNLSIEMGARGGMIAPDEVTFEYIKGRENAPQGEEWDQAVQYWKTLKSEDDAVFDKEVHFDAADIEPMITYGTNPGMGMGITQHIPTTDGMNETTKASFLKSLDYMGFQPGEALLGKKIDYVFLGACTNGRIEDFRAFASIVKGHQKAEHVIAWLVPGSWMVDAQIREEGLDKILEDAGFAIRQPGCSACLAMNDDKIPAGKYSVSTSNRNFEGRQGPGARTLLASPLVAAAAAITGVIADPRELM.

Cys345, Cys405, and Cys408 together coordinate [4Fe-4S] cluster.

This sequence belongs to the aconitase/IPM isomerase family. LeuC type 1 subfamily. As to quaternary structure, heterodimer of LeuC and LeuD. It depends on [4Fe-4S] cluster as a cofactor.

It carries out the reaction (2R,3S)-3-isopropylmalate = (2S)-2-isopropylmalate. Its pathway is amino-acid biosynthesis; L-leucine biosynthesis; L-leucine from 3-methyl-2-oxobutanoate: step 2/4. Catalyzes the isomerization between 2-isopropylmalate and 3-isopropylmalate, via the formation of 2-isopropylmaleate. The chain is 3-isopropylmalate dehydratase large subunit from Bacteroides fragilis (strain ATCC 25285 / DSM 2151 / CCUG 4856 / JCM 11019 / LMG 10263 / NCTC 9343 / Onslow / VPI 2553 / EN-2).